The sequence spans 298 residues: Ribosomal RNA small subunit methyltransferase A (298 aa).

Residues N35, L37, G62, E83, D108, and N133 each coordinate S-adenosyl-L-methionine.

Belongs to the class I-like SAM-binding methyltransferase superfamily. rRNA adenine N(6)-methyltransferase family. RsmA subfamily.

It is found in the cytoplasm. The enzyme catalyses adenosine(1518)/adenosine(1519) in 16S rRNA + 4 S-adenosyl-L-methionine = N(6)-dimethyladenosine(1518)/N(6)-dimethyladenosine(1519) in 16S rRNA + 4 S-adenosyl-L-homocysteine + 4 H(+). In terms of biological role, specifically dimethylates two adjacent adenosines (A1518 and A1519) in the loop of a conserved hairpin near the 3'-end of 16S rRNA in the 30S particle. May play a critical role in biogenesis of 30S subunits. In Streptococcus pyogenes serotype M2 (strain MGAS10270), this protein is Ribosomal RNA small subunit methyltransferase A.